A 118-amino-acid polypeptide reads, in one-letter code: Hydrogenase maturation factor HypA (118 aa).

H2 contacts Ni(2+). Zn(2+)-binding residues include C74, C77, C91, and C94.

The protein belongs to the HypA/HybF family.

In terms of biological role, involved in the maturation of [NiFe] hydrogenases. Required for nickel insertion into the metal center of the hydrogenase. The protein is Hydrogenase maturation factor HypA of Helicobacter hepaticus (strain ATCC 51449 / 3B1).